The following is a 296-amino-acid chain: Thioredoxin-related transmembrane protein 2 (296 aa).

The first 48 residues, 1–48 (MAVLAPLIALVYSVPRLSRWLAQPYYLLSALLSAAFLLVRKLPPLCHG), serve as a signal peptide directing secretion. The Extracellular segment spans residues 49–102 (LPTQREDGNPCDFDWREVEILMFLSAIVMMKNRRSITVEQHIGNIFMFSKVANA). Residues 103 to 125 (ILFFRLDIRMGLLYITLCIVFLM) traverse the membrane as a helical segment. A Thioredoxin domain is found at 114-270 (LLYITLCIVF…YQRAKKPSKA (157 aa)). The Cytoplasmic portion of the chain corresponds to 126–296 (TCEPPLYMGP…VSDGENKKDK (171 aa)). A phosphoserine mark is found at S211, S243, and S288. Residues 266-296 (KPSKAGDSIPEEQPVASAPTTVSDGENKKDK) form a disordered region. The short motif at 293–296 (KKDK) is the Di-lysine motif element.

Monomer. Homodimer; disulfide-linked. Occurs in both reduced and oxidized monomeric form. Oxidative conditions increase homodimerization. Interacts with CANX. Interacts with ATP2A2.

The protein localises to the endoplasmic reticulum membrane. It localises to the mitochondrion membrane. In terms of biological role, endoplasmic reticulum and mitochondria-associated protein that probably functions as a regulator of cellular redox state and thereby regulates protein post-translational modification, protein folding and mitochondrial activity. Indirectly regulates neuronal proliferation, migration, and organization in the developing brain. This Pongo abelii (Sumatran orangutan) protein is Thioredoxin-related transmembrane protein 2 (TMX2).